The sequence spans 503 residues: DnaJ homolog subfamily C member 3 (503 aa).

The N-terminal stretch at 1–31 (MVSAAASAGRLGSALPFLLVLLDLQYQGAEC) is a signal peptide. TPR repeat units lie at residues 37 to 70 (VEKQ…DSDN), 71 to 104 (YIAY…KQDF), 105 to 137 (TSRL…NPSN), 153 to 186 (LQRL…CVWD), 187 to 220 (AELR…KSDN), 221 to 254 (TEAF…DQDH), 267 to 300 (LNKQ…EPDV), 305 to 338 (TRAK…EPTN), and 339 to 372 (VNAL…SEND). A disulfide bridge connects residues Cys-247 and Cys-257. An intrachain disulfide couples Cys-312 to Cys-328. Residues 374–392 (QIREGLERAQRMLKQSQKR) form a flexible linker region. One can recognise a J domain in the interval 393-461 (DYYKILGVKR…EMRRKFDAGE (69 aa)).

The protein resides in the endoplasmic reticulum. May be involved in the unfolded protein response (UPR) during ER stress. This chain is DnaJ homolog subfamily C member 3 (DNAJC3), found in Gallus gallus (Chicken).